A 453-amino-acid polypeptide reads, in one-letter code: UDP-N-acetylmuramoylalanine--D-glutamate ligase (453 aa).

117–123 serves as a coordination point for ATP; sequence GANGKST.

It belongs to the MurCDEF family.

It localises to the cytoplasm. It catalyses the reaction UDP-N-acetyl-alpha-D-muramoyl-L-alanine + D-glutamate + ATP = UDP-N-acetyl-alpha-D-muramoyl-L-alanyl-D-glutamate + ADP + phosphate + H(+). It participates in cell wall biogenesis; peptidoglycan biosynthesis. Cell wall formation. Catalyzes the addition of glutamate to the nucleotide precursor UDP-N-acetylmuramoyl-L-alanine (UMA). The protein is UDP-N-acetylmuramoylalanine--D-glutamate ligase of Methylobacillus flagellatus (strain ATCC 51484 / DSM 6875 / VKM B-1610 / KT).